The following is a 923-amino-acid chain: RNA polymerase-associated protein RapA (923 aa).

The 171-residue stretch at 162–332 (EVGNRVNPRV…FARLRLLDPE (171 aa)) folds into the Helicase ATP-binding domain. 175-182 (DEVGLGKT) provides a ligand contact to ATP. Positions 278–281 (DEAH) match the DEAH box motif. Residues 443–597 (KIDWLIDFLK…TCPMGMALFS (155 aa)) form the Helicase C-terminal domain.

The protein belongs to the SNF2/RAD54 helicase family. RapA subfamily. In terms of assembly, interacts with the RNAP. Has a higher affinity for the core RNAP than for the holoenzyme. Its ATPase activity is stimulated by binding to RNAP.

Functionally, transcription regulator that activates transcription by stimulating RNA polymerase (RNAP) recycling in case of stress conditions such as supercoiled DNA or high salt concentrations. Probably acts by releasing the RNAP, when it is trapped or immobilized on tightly supercoiled DNA. Does not activate transcription on linear DNA. Probably not involved in DNA repair. The protein is RNA polymerase-associated protein RapA of Haemophilus influenzae (strain ATCC 51907 / DSM 11121 / KW20 / Rd).